A 386-amino-acid chain; its full sequence is MGSIGAVSMEFCFDVFKELKVHHANENIFYSPFTIISALAMVYLGAKDSTRTQINKVVRFDKLPGFGDSVEAQCGTSVNVHSSLRDILNQITKPNDVYSFSLASRLYAEETYPILPEYLQCVKELYRGGLESINFQTAADQARGLINSWVESQTNGMIKNVLQPSSVDSQTAMVLVNAIVFKGLWEKAFKDEDTQAIPFRVTEQESKPVQMMYQIGLFKVASMASEKMKILELPFASGTMSMWVLLPDEVSGLEQLETTISFEKMTEWISSNIMEERRIKVYLPRMKMEEKYNLTSVLMAMGITDLFSSSANLSGISSAGSLKISQAAHAAYAEIYEAGREVIGSAEAGADATSVSEEFRVDHPFLYCIKHNLTNSILFFGRCISP.

G2 bears the N-acetylglycine mark. The not cleaved signal peptide spans 22–48 (HHANENIFYSPFTIISALAMVYLGAKD). Phosphoserine is present on S69. Cysteines 74 and 121 form a disulfide. N-linked (GlcNAc...) asparagine glycosylation is found at N293 and N312. The residue at position 345 (S345) is a Phosphoserine. N372 carries an N-linked (GlcNAc...) asparagine glycan.

It belongs to the serpin family. Ov-serpin subfamily. In terms of processing, the signal sequence is not cleaved. The functional signal for membrane translocation of ovalbumin becomes accessible when the nascent chain is 50 to 60 residues long. The hydrophobic sequence which lies between residues 27 and 43 folds back on the preceding residues to form an amphipathic hairpin structure which is the signal element recognized by the membrane. Major protein of egg white.

It localises to the secreted. Storage protein of egg white. Lack protease inhibitory activity. The protein is Ovalbumin (SERPINB14) of Meleagris gallopavo (Wild turkey).